A 405-amino-acid chain; its full sequence is Fragilysin (405 aa).

An N-terminal signal peptide occupies residues 1–25 (MFILNFNKMKNVKLLLMLGTAALLA). His-356 provides a ligand contact to Zn(2+). The active site involves Glu-357. Zn(2+) is bound by residues His-360 and His-366.

It belongs to the peptidase M10C family. Zn(2+) serves as cofactor.

It localises to the secreted. It carries out the reaction Broad proteolytic specificity, bonds hydrolyzed includes -Gly-|-Leu-, -Met-|-Leu-, -Phe-|-Leu-, -Cys-|-Leu-, -Leu-|-Gly-.. In terms of biological role, diarrheal toxin that hydrolyzes gelatin, azocoll, actin, tropomyosin, and fibrinogen. The polypeptide is Fragilysin (btfP) (Bacteroides fragilis).